The sequence spans 363 residues: Peptide chain release factor 1 (363 aa).

Glutamine 237 is modified (N5-methylglutamine). Residues 284–297 (ERAKQQSERSEQRR) are compositionally biased toward basic and acidic residues. Residues 284–306 (ERAKQQSERSEQRRLAVGSGDRS) form a disordered region.

This sequence belongs to the prokaryotic/mitochondrial release factor family. In terms of processing, methylated by PrmC. Methylation increases the termination efficiency of RF1.

The protein localises to the cytoplasm. Peptide chain release factor 1 directs the termination of translation in response to the peptide chain termination codons UAG and UAA. The sequence is that of Peptide chain release factor 1 from Halorhodospira halophila (strain DSM 244 / SL1) (Ectothiorhodospira halophila (strain DSM 244 / SL1)).